A 445-amino-acid chain; its full sequence is Amino-acid acetyltransferase (445 aa).

The N-acetyltransferase domain occupies glutamate 299–leucine 445.

Belongs to the acetyltransferase family. ArgA subfamily.

The protein resides in the cytoplasm. The catalysed reaction is L-glutamate + acetyl-CoA = N-acetyl-L-glutamate + CoA + H(+). It participates in amino-acid biosynthesis; L-arginine biosynthesis; N(2)-acetyl-L-ornithine from L-glutamate: step 1/4. The chain is Amino-acid acetyltransferase (argA) from Shewanella oneidensis (strain ATCC 700550 / JCM 31522 / CIP 106686 / LMG 19005 / NCIMB 14063 / MR-1).